The sequence spans 395 residues: S-adenosylmethionine synthase (395 aa).

His16 lines the ATP pocket. Asp18 serves as a coordination point for Mg(2+). Position 44 (Glu44) interacts with K(+). L-methionine is bound by residues Glu57 and Gln100. The segment at 100–110 (QSPDIAGGVNL) is flexible loop. ATP-binding positions include 175–177 (DGK), 242–243 (RF), Asp251, 257–258 (RK), Ala274, and Lys278. Asp251 contributes to the L-methionine binding site. Position 282 (Lys282) interacts with L-methionine.

It belongs to the AdoMet synthase family. Homotetramer; dimer of dimers. It depends on Mg(2+) as a cofactor. K(+) is required as a cofactor.

The protein localises to the cytoplasm. It carries out the reaction L-methionine + ATP + H2O = S-adenosyl-L-methionine + phosphate + diphosphate. It functions in the pathway amino-acid biosynthesis; S-adenosyl-L-methionine biosynthesis; S-adenosyl-L-methionine from L-methionine: step 1/1. Its function is as follows. Catalyzes the formation of S-adenosylmethionine (AdoMet) from methionine and ATP. The overall synthetic reaction is composed of two sequential steps, AdoMet formation and the subsequent tripolyphosphate hydrolysis which occurs prior to release of AdoMet from the enzyme. The protein is S-adenosylmethionine synthase of Thermus thermophilus (strain ATCC BAA-163 / DSM 7039 / HB27).